Here is a 256-residue protein sequence, read N- to C-terminus: MLVAVDIGNTNIVLGFLDGDAIAGTYRITTKANHTSDEYGLFLTEFLRMSGFQPSDVDDVIICSVVPKVMHSFRSSIVKFLDIDPMVVGPGIKTGMNVRVDDPKSLGADILADCAGAYYEYGGPVLVADFGTATTFTHVSDKGVVDSGVITTGIRAGAAALWGDTAQLPEVEITRPDTILGTNTKTCMQAGLYYTFLGGVERTIRQFRRELGGEDFKVITTGGLGRVFENDTELIDVYDPDLIFKGMAHIYSRNVK.

6 to 13 (DIGNTNIV) is a binding site for ATP. Position 107-110 (107-110 (GADI)) interacts with substrate. The Proton acceptor role is filled by Asp-109. Asp-129 serves as a coordination point for K(+). Thr-132 serves as a coordination point for ATP. Thr-184 contributes to the substrate binding site.

It belongs to the type III pantothenate kinase family. Homodimer. NH4(+) serves as cofactor. The cofactor is K(+).

It localises to the cytoplasm. The catalysed reaction is (R)-pantothenate + ATP = (R)-4'-phosphopantothenate + ADP + H(+). It participates in cofactor biosynthesis; coenzyme A biosynthesis; CoA from (R)-pantothenate: step 1/5. Its function is as follows. Catalyzes the phosphorylation of pantothenate (Pan), the first step in CoA biosynthesis. This chain is Type III pantothenate kinase, found in Bifidobacterium longum (strain DJO10A).